Here is an 89-residue protein sequence, read N- to C-terminus: Small ribosomal subunit protein uS15 (89 aa).

Residues 1–11 (MSIAAERKAEV) show a composition bias toward basic and acidic residues. The interval 1–25 (MSIAAERKAEVIKTSANKPGDTGSP) is disordered.

This sequence belongs to the universal ribosomal protein uS15 family. Part of the 30S ribosomal subunit. Forms a bridge to the 50S subunit in the 70S ribosome, contacting the 23S rRNA.

Functionally, one of the primary rRNA binding proteins, it binds directly to 16S rRNA where it helps nucleate assembly of the platform of the 30S subunit by binding and bridging several RNA helices of the 16S rRNA. Forms an intersubunit bridge (bridge B4) with the 23S rRNA of the 50S subunit in the ribosome. This Nitrobacter winogradskyi (strain ATCC 25391 / DSM 10237 / CIP 104748 / NCIMB 11846 / Nb-255) protein is Small ribosomal subunit protein uS15.